The primary structure comprises 585 residues: Suppressor of mec-8 and unc-52 protein homolog 2 (585 aa).

The segment covering 1-14 has biased composition (basic residues); the sequence is MKPSKSHHKEKTAR. 2 disordered regions span residues 1–52 and 219–324; these read MKPS…SSFH and KKKK…PRDK. The span at 15-39 shows a compositional bias: basic and acidic residues; that stretch reads RREEKLEESDNPKYRDRAKERRENQ. R-[ED] repeat units lie at residues 16-17, 29-30, 36-37, and 258-259; these read RE and RD. Residues 276 to 288 are compositionally biased toward basic and acidic residues; sequence LSTKQEEPPVART. R-[ED] repeat units follow at residues 322 to 323, 436 to 437, 445 to 446, 450 to 451, 540 to 541, and 542 to 543; these read RD and RE. The segment at 523–585 is disordered; it reads FQFGVKMQDG…EAQTPKRSKH (63 aa). Residues 530–548 are compositionally biased toward basic and acidic residues; the sequence is QDGRKTRKQNRDRDQKLNN. The residue at position 579 (threonine 579) is a Phosphothreonine.

Belongs to the RED family. As to quaternary structure, component of the spliceosome. Interacts with SMU1. Highly expressed in seedlings at 7 days after germination, young flowers before anthesis and developing siliques. Expressed at lower levels in roots, expanding leaves, open flowers, dry seeds and inflorescences. Not detected in senescing leaves.

Its subcellular location is the nucleus. Its function is as follows. Auxiliary spliceosomal protein involved in splicing of specific pre-mRNAs that affect multiple aspects of development. In Arabidopsis thaliana (Mouse-ear cress), this protein is Suppressor of mec-8 and unc-52 protein homolog 2 (SMU2).